A 680-amino-acid chain; its full sequence is DNA-directed RNA polymerase subunit beta' (680 aa).

The Zn(2+) site is built by C69, C71, C87, and C90. Mg(2+) contacts are provided by D489, D491, and D493.

It belongs to the RNA polymerase beta' chain family. RpoC1 subfamily. In plastids the minimal PEP RNA polymerase catalytic core is composed of four subunits: alpha, beta, beta', and beta''. When a (nuclear-encoded) sigma factor is associated with the core the holoenzyme is formed, which can initiate transcription. It depends on Mg(2+) as a cofactor. The cofactor is Zn(2+).

It is found in the plastid. The protein resides in the chloroplast. It carries out the reaction RNA(n) + a ribonucleoside 5'-triphosphate = RNA(n+1) + diphosphate. In terms of biological role, DNA-dependent RNA polymerase catalyzes the transcription of DNA into RNA using the four ribonucleoside triphosphates as substrates. In Ceratophyllum demersum (Rigid hornwort), this protein is DNA-directed RNA polymerase subunit beta'.